A 1358-amino-acid polypeptide reads, in one-letter code: Probable serine/threonine-protein kinase ifkB (1358 aa).

The Protein kinase domain occupies 1–582 (MIGKGGFGVV…TKQLLESGLL (582 aa)). ATP-binding positions include 2–10 (IGKGGFGVV) and K25. The interval 125-359 (GANNTAGGGD…SSSRKKPPKE (235 aa)) is disordered. A compositionally biased stretch (polar residues) spans 136-148 (VSNANSNKSMIVG). The span at 149 to 196 (NNNKKLTLSSSNTSSSSSLLSNNKSKILNTSKSTSTNTSTSTSTSNTN) shows a compositional bias: low complexity. Residues 197–208 (KNKKISKKKKSK) show a composition bias toward basic residues. Residues 258–285 (NNNNDSNNNYHSDNESDSFSGSISMSDG) show a composition bias toward low complexity. Acidic residues predominate over residues 306-333 (DDNENDDDDEEDDDDEYDEEDDDYETFD). The span at 342 to 351 (SNNSKLSTSS) shows a compositional bias: low complexity. Residue D413 is the Proton acceptor of the active site. 2 disordered regions span residues 445–470 (DDLN…TAQQ) and 1148–1204 (GSGG…QQTS). Positions 447 to 466 (LNSSTSNAANNINLSSSTNS) are enriched in low complexity. A compositionally biased stretch (gly residues) spans 1148–1172 (GSGGSGGSGGGSSMSSGGGGGGNSN). The segment covering 1185-1199 (SNQSTSSSGNSNNSN) has biased composition (low complexity).

The protein belongs to the protein kinase superfamily. Ser/Thr protein kinase family. GCN2 subfamily.

The catalysed reaction is L-seryl-[protein] + ATP = O-phospho-L-seryl-[protein] + ADP + H(+). The enzyme catalyses L-threonyl-[protein] + ATP = O-phospho-L-threonyl-[protein] + ADP + H(+). This Dictyostelium discoideum (Social amoeba) protein is Probable serine/threonine-protein kinase ifkB (ifkB).